A 403-amino-acid polypeptide reads, in one-letter code: Accessory Sec system protein translocase subunit SecY2 (403 aa).

10 helical membrane passes run 17-37 (MLYT…SIVS), 63-83 (LNIF…LMLI), 105-125 (ILTL…YVSK), 131-151 (DNIY…VWLA), 157-177 (YGIA…MMHQ), 186-206 (HIVI…LLFI), 240-260 (ITLM…HFIL), 276-296 (FDSP…GYFL), 339-359 (WFGL…TLFV), and 366-386 (IYFS…AETI).

The protein belongs to the SecY/SEC61-alpha family. SecY2 subfamily. As to quaternary structure, may form heterotrimers with SecE and SecG subunits (Potential). Component of the accessory SecA2/SecY2 protein translocase complex required to export cell wall protein SrpA.

Its subcellular location is the cell membrane. The central subunit of a protein translocation channel (Potential). Part of the accessory SecA2/SecY2 system specifically required to export SraP, a serine-rich repeat cell wall protein encoded upstream in the same operon. The polypeptide is Accessory Sec system protein translocase subunit SecY2 (Staphylococcus aureus (strain NCTC 8325 / PS 47)).